We begin with the raw amino-acid sequence, 354 residues long: Ferrochelatase (354 aa).

Fe cation contacts are provided by His-204 and Glu-306.

The protein belongs to the ferrochelatase family.

It localises to the cytoplasm. It catalyses the reaction heme b + 2 H(+) = protoporphyrin IX + Fe(2+). Its pathway is porphyrin-containing compound metabolism; protoheme biosynthesis; protoheme from protoporphyrin-IX: step 1/1. Catalyzes the ferrous insertion into protoporphyrin IX. This Coxiella burnetii (strain RSA 493 / Nine Mile phase I) protein is Ferrochelatase.